Consider the following 257-residue polypeptide: MFKYQTILSPLDQFEIRNLFSIDTPLLANMNLSITNIGLYMTIAAFIAFYFSILATNHSKITPNKWSLSQETLYATIHSIVVNQINNKNGQAYFPFMYTLFIFILINNLIGMVPYSFASTSHFILTFSLSFTVVLGATVLGFKEHGLKFFSLFVPAGCPLGLLPLLVLIEFISYLARNVSLGLRLAANILSGHMLLNILSGFTYNIMSSGIIFFILGLLPLAFIIAFSGLELGIAFIQSQVFVVLSCSYIKDALELH.

The next 6 helical transmembrane spans lie at 34–54 (ITNIGLYMTIAAFIAFYFSIL), 93–113 (YFPFMYTLFIFILINNLIGMV), 122–142 (HFILTFSLSFTVVLGATVLGF), 149–169 (FFSLFVPAGCPLGLLPLLVLI), 187–207 (ANILSGHMLLNILSGFTYNIM), and 210–230 (GIIFFILGLLPLAFIIAFSGL).

It belongs to the ATPase A chain family. As to quaternary structure, F-type ATPases have 2 components, CF(1) - the catalytic core - and CF(0) - the membrane proton channel. CF(1) has five subunits: alpha(3), beta(3), gamma(1), delta(1), epsilon(1). CF(0) has three main subunits: a, b and c.

It is found in the mitochondrion inner membrane. Functionally, mitochondrial membrane ATP synthase (F(1)F(0) ATP synthase or Complex V) produces ATP from ADP in the presence of a proton gradient across the membrane which is generated by electron transport complexes of the respiratory chain. F-type ATPases consist of two structural domains, F(1) - containing the extramembraneous catalytic core and F(0) - containing the membrane proton channel, linked together by a central stalk and a peripheral stalk. During catalysis, ATP synthesis in the catalytic domain of F(1) is coupled via a rotary mechanism of the central stalk subunits to proton translocation. Key component of the proton channel; it may play a direct role in the translocation of protons across the membrane. This Cochliobolus heterostrophus (Southern corn leaf blight fungus) protein is ATP synthase subunit a (ATP6).